The following is a 201-amino-acid chain: dITP/XTP pyrophosphatase (201 aa).

7 to 12 (SNNAHK) serves as a coordination point for substrate. Asp-72 acts as the Proton acceptor in catalysis. A Mg(2+)-binding site is contributed by Asp-72. Residues Ser-73, 154 to 157 (FGYD), Lys-177, and 182 to 183 (HR) contribute to the substrate site.

The protein belongs to the HAM1 NTPase family. In terms of assembly, homodimer. Mg(2+) is required as a cofactor.

The enzyme catalyses XTP + H2O = XMP + diphosphate + H(+). The catalysed reaction is dITP + H2O = dIMP + diphosphate + H(+). It catalyses the reaction ITP + H2O = IMP + diphosphate + H(+). Pyrophosphatase that catalyzes the hydrolysis of nucleoside triphosphates to their monophosphate derivatives, with a high preference for the non-canonical purine nucleotides XTP (xanthosine triphosphate), dITP (deoxyinosine triphosphate) and ITP. Seems to function as a house-cleaning enzyme that removes non-canonical purine nucleotides from the nucleotide pool, thus preventing their incorporation into DNA/RNA and avoiding chromosomal lesions. The polypeptide is dITP/XTP pyrophosphatase (Leuconostoc mesenteroides subsp. mesenteroides (strain ATCC 8293 / DSM 20343 / BCRC 11652 / CCM 1803 / JCM 6124 / NCDO 523 / NBRC 100496 / NCIMB 8023 / NCTC 12954 / NRRL B-1118 / 37Y)).